We begin with the raw amino-acid sequence, 207 residues long: ConoCAP (207 aa).

An N-terminal signal peptide occupies residues 1–21 (MVSLGHVLFVILLPVLLPVAA). Residues 22–48 (DDPDDQMLSQISLPSSSRSEYDDNDVS) constitute a propeptide that is removed on maturation. Cys53 and Cys59 are oxidised to a cystine. The residue at position 60 (Gly60) is a Glycine amide. A propeptide spanning residues 63–82 (HRDRSRRQERYGKRLIPVLA) is cleaved from the precursor. Cys87 and Cys92 are oxidised to a cystine. Asn94 is modified (asparagine amide). A propeptide spanning residues 98–160 (SLSGAGPALS…RDPAASGDLS (63 aa)) is cleaved from the precursor. Positions 131–155 (ARHEQQQQLLQQREQRGLESRDPAA) are disordered. Basic and acidic residues predominate over residues 143 to 152 (REQRGLESRD). Cys165 and Cys171 are oxidised to a cystine. Residue Gly173 is modified to Glycine amide. A propeptide spanning residues 177 to 207 (TLYSPWLERMNEVADDRSARNALCTRLGWRE) is cleaved from the precursor.

Expressed by the venom duct.

It localises to the secreted. In terms of biological role, in contrast to other members of the CCAP family which are cardio-accelerators, conoCAP-a decreases the heart frequency in Drosophila larvae (26%), rats and zebrafish embryos. It also reduces the blood pressure in rats. It decreases systolic calcium in ventricular cardiac myocytes, indicating that it may act via impairment of intracellular calcium trafficking. Synthetic conoCAP-b decreases the heart frequency of 23% in Drosophila larvae. Its function is as follows. Synthetic conoCAP-c decreases the heart frequency of 12% in Drosophila larvae. The chain is ConoCAP (conoCAP) from Conus villepinii (Villepin's cone).